The chain runs to 757 residues: 5-methyltetrahydropteroyltriglutamate--homocysteine methyltransferase (757 aa).

5-methyltetrahydropteroyltri-L-glutamate is bound by residues 16–19 and Lys-112; that span reads RELK. Residues 432–434 and Glu-485 contribute to the L-homocysteine site; that span reads IGS. Residues 432 to 434 and Glu-485 contribute to the L-methionine site; that span reads IGS. 5-methyltetrahydropteroyltri-L-glutamate-binding positions include 516–517 and Trp-562; that span reads RC. Asp-600 lines the L-homocysteine pocket. Asp-600 lines the L-methionine pocket. A 5-methyltetrahydropteroyltri-L-glutamate-binding site is contributed by Glu-606. 3 residues coordinate Zn(2+): His-642, Cys-644, and Glu-666. The Proton donor role is filled by His-695. Cys-727 serves as a coordination point for Zn(2+).

It belongs to the vitamin-B12 independent methionine synthase family. It depends on Zn(2+) as a cofactor.

The catalysed reaction is 5-methyltetrahydropteroyltri-L-glutamate + L-homocysteine = tetrahydropteroyltri-L-glutamate + L-methionine. It functions in the pathway amino-acid biosynthesis; L-methionine biosynthesis via de novo pathway; L-methionine from L-homocysteine (MetE route): step 1/1. Functionally, catalyzes the transfer of a methyl group from 5-methyltetrahydrofolate to homocysteine resulting in methionine formation. In Actinobacillus pleuropneumoniae serotype 7 (strain AP76), this protein is 5-methyltetrahydropteroyltriglutamate--homocysteine methyltransferase.